We begin with the raw amino-acid sequence, 270 residues long: Glucosamine-6-phosphate deaminase (270 aa).

Catalysis depends on Asp68, which acts as the Proton acceptor; for enolization step. The For ring-opening step role is filled by Asp145. His147 functions as the Proton acceptor; for ring-opening step in the catalytic mechanism. Glu152 functions as the For ring-opening step in the catalytic mechanism.

The protein belongs to the glucosamine/galactosamine-6-phosphate isomerase family. NagB subfamily.

The enzyme catalyses alpha-D-glucosamine 6-phosphate + H2O = beta-D-fructose 6-phosphate + NH4(+). It functions in the pathway amino-sugar metabolism; N-acetylneuraminate degradation; D-fructose 6-phosphate from N-acetylneuraminate: step 5/5. Catalyzes the reversible isomerization-deamination of glucosamine 6-phosphate (GlcN6P) to form fructose 6-phosphate (Fru6P) and ammonium ion. The polypeptide is Glucosamine-6-phosphate deaminase (Bifidobacterium longum (strain DJO10A)).